Here is a 443-residue protein sequence, read N- to C-terminus: Glucose-6-phosphate isomerase (443 aa).

Glu-285 functions as the Proton donor in the catalytic mechanism. Catalysis depends on residues His-306 and Lys-420.

The protein belongs to the GPI family.

It is found in the cytoplasm. It catalyses the reaction alpha-D-glucose 6-phosphate = beta-D-fructose 6-phosphate. It participates in carbohydrate biosynthesis; gluconeogenesis. Its pathway is carbohydrate degradation; glycolysis; D-glyceraldehyde 3-phosphate and glycerone phosphate from D-glucose: step 2/4. Catalyzes the reversible isomerization of glucose-6-phosphate to fructose-6-phosphate. This Staphylococcus aureus (strain NCTC 8325 / PS 47) protein is Glucose-6-phosphate isomerase.